A 158-amino-acid polypeptide reads, in one-letter code: SsrA-binding protein (158 aa).

Positions 136 to 151 are enriched in basic and acidic residues; that stretch reads KRADSKSRDWARDKQR. The interval 136 to 158 is disordered; the sequence is KRADSKSRDWARDKQRIMKHSTR.

It belongs to the SmpB family.

The protein resides in the cytoplasm. Functionally, required for rescue of stalled ribosomes mediated by trans-translation. Binds to transfer-messenger RNA (tmRNA), required for stable association of tmRNA with ribosomes. tmRNA and SmpB together mimic tRNA shape, replacing the anticodon stem-loop with SmpB. tmRNA is encoded by the ssrA gene; the 2 termini fold to resemble tRNA(Ala) and it encodes a 'tag peptide', a short internal open reading frame. During trans-translation Ala-aminoacylated tmRNA acts like a tRNA, entering the A-site of stalled ribosomes, displacing the stalled mRNA. The ribosome then switches to translate the ORF on the tmRNA; the nascent peptide is terminated with the 'tag peptide' encoded by the tmRNA and targeted for degradation. The ribosome is freed to recommence translation, which seems to be the essential function of trans-translation. The sequence is that of SsrA-binding protein from Photobacterium profundum (strain SS9).